The chain runs to 342 residues: Phosphate acyltransferase (342 aa).

It belongs to the PlsX family. In terms of assembly, homodimer. Probably interacts with PlsY.

Its subcellular location is the cytoplasm. It carries out the reaction a fatty acyl-[ACP] + phosphate = an acyl phosphate + holo-[ACP]. The protein operates within lipid metabolism; phospholipid metabolism. In terms of biological role, catalyzes the reversible formation of acyl-phosphate (acyl-PO(4)) from acyl-[acyl-carrier-protein] (acyl-ACP). This enzyme utilizes acyl-ACP as fatty acyl donor, but not acyl-CoA. The protein is Phosphate acyltransferase of Shewanella sp. (strain MR-4).